The sequence spans 475 residues: Fez family zinc finger protein 1 (475 aa).

Positions 28-43 (PLAFSIERIMARTPEP) match the Engrailed homology 1 repressor motif. C2H2-type zinc fingers lie at residues 260–282 (FTCE…MPVH), 288–310 (FVCK…KIIH), 316–338 (HKCN…TRIH), 344–366 (FVCE…KLTH), 372–394 (FKCN…MHTH), and 400–423 (FTCP…RKLH). The segment at 428–475 (GLARTPAGEPGTEPPPPLPQQPPMTLPPLQPPLPTPGPLQPGLHQGHQ) is disordered. Over residues 439–466 (TEPPPPLPQQPPMTLPPLQPPLPTPGPL) the composition is skewed to pro residues.

It belongs to the krueppel C2H2-type zinc-finger protein family. As to expression, expressed in brain. Little or no expression in other tissues. Overexpressed specifically in gastric cancers. A 2- to 20-fold increase is found in over 50% of gastric cancer tissues.

It is found in the nucleus. Transcription repressor. Involved in the axonal projection and proper termination of olfactory sensory neurons (OSN). Plays a role in rostro-caudal patterning of the diencephalon and in prethalamic formation. Expression is required in OSN to cell-autonomously regulate OSN axon projections. Regulates non-cell-autonomously the layer formation of the olfactory bulb development and the interneurons. May be required for correct rostral migration of the interneuron progenitors. This chain is Fez family zinc finger protein 1 (FEZF1), found in Homo sapiens (Human).